Here is a 109-residue protein sequence, read N- to C-terminus: Small ribosomal subunit protein bS6 (109 aa).

This sequence belongs to the bacterial ribosomal protein bS6 family.

Its function is as follows. Binds together with bS18 to 16S ribosomal RNA. The polypeptide is Small ribosomal subunit protein bS6 (Ehrlichia canis (strain Jake)).